The chain runs to 279 residues: Sarcosine/dimethylglycine N-methyltransferase (279 aa).

It belongs to the methyltransferase superfamily. As to quaternary structure, monomer.

The enzyme catalyses sarcosine + 2 S-adenosyl-L-methionine = glycine betaine + 2 S-adenosyl-L-homocysteine + 2 H(+). It catalyses the reaction sarcosine + S-adenosyl-L-methionine = N,N-dimethylglycine + S-adenosyl-L-homocysteine + H(+). The catalysed reaction is N,N-dimethylglycine + S-adenosyl-L-methionine = glycine betaine + S-adenosyl-L-homocysteine + H(+). It participates in amine and polyamine biosynthesis; betaine biosynthesis via glycine pathway; betaine from glycine: step 2/3. Its pathway is amine and polyamine biosynthesis; betaine biosynthesis via glycine pathway; betaine from glycine: step 3/3. P-chloromercuribenzoate acid inhibits 23% of the SDMT activities on sarcosine and dimethylglycine, and S-adenosylhomocysteine (AdoHcy) inhibits completely GSMT activities. Catalyzes the methylation of sarcosine and dimethylglycine to dimethylglycine and betaine, respectively, with S-adenosylmethionine (AdoMet) acting as the methyl donor. It has strict specificity for sarcosine and dimethylglycine as the methyl group acceptors. This Halorhodospira halochloris (Ectothiorhodospira halochloris) protein is Sarcosine/dimethylglycine N-methyltransferase.